Here is a 234-residue protein sequence, read N- to C-terminus: Purine nucleoside phosphorylase DeoD-type (234 aa).

Histidine 4 contributes to the a purine D-ribonucleoside binding site. Phosphate contacts are provided by residues glycine 20, arginine 24, arginine 43, and 87-90; that span reads RVGT. Residues glutamate 162, 178 to 180, and 202 to 203 each bind a purine D-ribonucleoside; these read EME and SD. The active-site Proton donor is aspartate 203.

The protein belongs to the PNP/UDP phosphorylase family. As to quaternary structure, homohexamer; trimer of homodimers.

The enzyme catalyses a purine D-ribonucleoside + phosphate = a purine nucleobase + alpha-D-ribose 1-phosphate. It carries out the reaction a purine 2'-deoxy-D-ribonucleoside + phosphate = a purine nucleobase + 2-deoxy-alpha-D-ribose 1-phosphate. Catalyzes the reversible phosphorolytic breakdown of the N-glycosidic bond in the beta-(deoxy)ribonucleoside molecules, with the formation of the corresponding free purine bases and pentose-1-phosphate. The protein is Purine nucleoside phosphorylase DeoD-type of Anoxybacillus flavithermus (strain DSM 21510 / WK1).